A 480-amino-acid chain; its full sequence is NADH-quinone oxidoreductase subunit N (480 aa).

13 consecutive transmembrane segments (helical) span residues 10 to 30, 40 to 60, 80 to 100, 117 to 137, 166 to 186, 208 to 228, 246 to 266, 276 to 296, 304 to 324, 330 to 350, 374 to 394, 409 to 431, and 452 to 472; these read FISIGPLLIVLMTALIIILIE, WSSLISIGGLTLSIFAVWGGI, FFTVFFLVIGIGASLLATAFF, AVFGLILIGAAADLLTLFLGI, LMGSIVAGFLLYGIALVYGAI, VLFFSGIAMITLGLAFKAALV, TAFMAVGTKVGVFAAFVRLFF, WNQVIDTLVYATLIYANFVAL, FFAYSSISHAGFLMIPVVIGN, ALTFYLVIYAIATFGCFAVLA, LASLLSICLLTLAGIPPTAGF, YYGLVIVGLLTTILSSYYYLRII, and IVGTTSFIAIIILSFYPAPFL.

It belongs to the complex I subunit 2 family. As to quaternary structure, NDH-1 is composed of 14 different subunits. Subunits NuoA, H, J, K, L, M, N constitute the membrane sector of the complex.

Its subcellular location is the cell inner membrane. The catalysed reaction is a quinone + NADH + 5 H(+)(in) = a quinol + NAD(+) + 4 H(+)(out). Its function is as follows. NDH-1 shuttles electrons from NADH, via FMN and iron-sulfur (Fe-S) centers, to quinones in the respiratory chain. The immediate electron acceptor for the enzyme in this species is believed to be ubiquinone. Couples the redox reaction to proton translocation (for every two electrons transferred, four hydrogen ions are translocated across the cytoplasmic membrane), and thus conserves the redox energy in a proton gradient. The polypeptide is NADH-quinone oxidoreductase subunit N (Protochlamydia amoebophila (strain UWE25)).